Here is a 384-residue protein sequence, read N- to C-terminus: 8-amino-7-oxononanoate synthase (384 aa).

Arg21 is a substrate binding site. 108 to 109 (GF) is a pyridoxal 5'-phosphate binding site. A substrate-binding site is contributed by His133. Pyridoxal 5'-phosphate-binding residues include Ser179, His207, and Thr233. An N6-(pyridoxal phosphate)lysine modification is found at Lys236. Thr352 is a binding site for substrate.

This sequence belongs to the class-II pyridoxal-phosphate-dependent aminotransferase family. BioF subfamily. Homodimer. The cofactor is pyridoxal 5'-phosphate.

It catalyses the reaction 6-carboxyhexanoyl-[ACP] + L-alanine + H(+) = (8S)-8-amino-7-oxononanoate + holo-[ACP] + CO2. It participates in cofactor biosynthesis; biotin biosynthesis. In terms of biological role, catalyzes the decarboxylative condensation of pimeloyl-[acyl-carrier protein] and L-alanine to produce 8-amino-7-oxononanoate (AON), [acyl-carrier protein], and carbon dioxide. The sequence is that of 8-amino-7-oxononanoate synthase from Escherichia coli O7:K1 (strain IAI39 / ExPEC).